The sequence spans 443 residues: MSEMTPREIVSELDQHIIGQADAKRAVAIALRNRWRRMQLQEPLRHEVTPKNILMIGPTGVGKTEIARRLAKLANAPFIKVEATKFTEVGYVGKEVDSIIRDLTDSAMKLVRQTEIEKNRFRAEEMAEERVLDTLLPPAKDQWGQIEERDTNTNTRQIFRKKLREGQLDDREIEIDIAAPNIGVEIMAPPGMEEMTNQLQSMFQNLSSGQTKKRKMKIKDALKALIDDEAAKLINPEELKQKAIDAVEQNGIVFIDEIDKICKKGEYSGADVSREGVQRDLLPLVEGSTVNTKHGMVKTDHILFIASGAFQVARPSDLIPELQGRLPIRVELSALTAKDFERILTEPNASLTEQYQALMATEGVDIEFTESAVKKIAEAAFRVNEKTENIGARRLHTVMERLMDKISFDASEMSGQNVIIDGDYVTGALGDVVENEDLSHFIL.

Residues Ile-18, 60–65 (GVGKTE), Asp-256, Glu-321, and Arg-393 contribute to the ATP site.

This sequence belongs to the ClpX chaperone family. HslU subfamily. In terms of assembly, a double ring-shaped homohexamer of HslV is capped on each side by a ring-shaped HslU homohexamer. The assembly of the HslU/HslV complex is dependent on binding of ATP.

The protein localises to the cytoplasm. Functionally, ATPase subunit of a proteasome-like degradation complex; this subunit has chaperone activity. The binding of ATP and its subsequent hydrolysis by HslU are essential for unfolding of protein substrates subsequently hydrolyzed by HslV. HslU recognizes the N-terminal part of its protein substrates and unfolds these before they are guided to HslV for hydrolysis. This is ATP-dependent protease ATPase subunit HslU from Histophilus somni (strain 2336) (Haemophilus somnus).